Consider the following 91-residue polypeptide: Acylphosphatase (91 aa).

Residues 3–91 enclose the Acylphosphatase-like domain; sequence CLRAIVKGKV…ANYSDFRIKH (89 aa). Active-site residues include Arg18 and Asn36.

Belongs to the acylphosphatase family.

The enzyme catalyses an acyl phosphate + H2O = a carboxylate + phosphate + H(+). This is Acylphosphatase (acyP) from Dehalococcoides mccartyi (strain CBDB1).